An 87-amino-acid chain; its full sequence is FXYD domain-containing ion transport regulator 3 (87 aa).

Residues 1 to 20 form the signal peptide; sequence MQKVTLGLLVFLAGFPVLDA. The Extracellular segment spans residues 21–38; sequence NDLEDKNSPFYYDWHSLQ. A helical transmembrane segment spans residues 39 to 59; it reads VGGLICAGVLCAMGIIIVMSA. Over 60–87 the chain is Cytoplasmic; it reads KCKCKFGQKSGHHPGETPPLITPGSAQS. The disordered stretch occupies residues 66–87; that stretch reads GQKSGHHPGETPPLITPGSAQS.

It belongs to the FXYD family. In terms of assembly, regulatory subunit of the sodium/potassium-transporting ATPase which is composed of a catalytic alpha subunit, a non-catalytic beta subunit and an additional regulatory subunit. Interacts with catalytic alpha subunit ATP1A1. Also interacts with non-catalytic beta subunit ATP1B1. Interacts with the ATP1A1-ATP1B1, ATP1A2-ATP1B1 and ATP1A3-ATP1B1 NKA isozymes. Glutathionylated. Isoform 1: Expressed mainly in differentiated cells (at protein level). Isoform 2: Expressed mainly in undifferentiated cells (at protein level).

Its subcellular location is the cell membrane. Functionally, associates with and regulates the activity of the sodium/potassium-transporting ATPase (NKA) which transports Na(+) out of the cell and K(+) into the cell. Reduces glutathionylation of the NKA beta-1 subunit ATP1B1, thus reversing glutathionylation-mediated inhibition of ATP1B1. Induces a hyperpolarization-activated chloride current when expressed in Xenopus oocytes. Its function is as follows. Decreases the apparent K+ and Na+ affinity of the sodium/potassium-transporting ATPase over a large range of membrane potentials. In terms of biological role, decreases the apparent K+ affinity of the sodium/potassium-transporting ATPase only at slightly negative and positive membrane potentials and increases the apparent Na+ affinity over a large range of membrane potentials. In Homo sapiens (Human), this protein is FXYD domain-containing ion transport regulator 3 (FXYD3).